Consider the following 507-residue polypeptide: Cysteine--tRNA ligase (507 aa).

Cys-29 lines the Zn(2+) pocket. The 'HIGH' region signature appears at 31-41; the sequence is PTVYDVPHIGN. Cys-207, His-232, and Glu-236 together coordinate Zn(2+). Positions 265-269 match the 'KMSKS' region motif; the sequence is KMSKS. Lys-268 contributes to the ATP binding site.

This sequence belongs to the class-I aminoacyl-tRNA synthetase family. In terms of assembly, monomer. It depends on Zn(2+) as a cofactor.

It is found in the cytoplasm. It carries out the reaction tRNA(Cys) + L-cysteine + ATP = L-cysteinyl-tRNA(Cys) + AMP + diphosphate. This Neorickettsia sennetsu (strain ATCC VR-367 / Miyayama) (Ehrlichia sennetsu) protein is Cysteine--tRNA ligase.